Consider the following 309-residue polypeptide: Tagatose-6-phosphate kinase (309 aa).

Belongs to the carbohydrate kinase PfkB family. LacC subfamily.

The enzyme catalyses D-tagatofuranose 6-phosphate + ATP = D-tagatofuranose 1,6-bisphosphate + ADP + H(+). It functions in the pathway carbohydrate metabolism; D-tagatose 6-phosphate degradation; D-glyceraldehyde 3-phosphate and glycerone phosphate from D-tagatose 6-phosphate: step 1/2. This is Tagatose-6-phosphate kinase from Streptococcus pyogenes serotype M1.